The following is a 223-amino-acid chain: Ribonuclease 3 (223 aa).

Residues 3 to 125 form the RNase III domain; sequence LERLQKKLGY…IIAAVYLDAG (123 aa). Glu-38 serves as a coordination point for Mg(2+). Asp-42 is an active-site residue. Positions 111 and 114 each coordinate Mg(2+). Glu-114 is a catalytic residue. One can recognise a DRBM domain in the interval 152-222; sequence DPKTRLQEYL…ALQVIKVLGI (71 aa).

It belongs to the ribonuclease III family. Homodimer. It depends on Mg(2+) as a cofactor.

Its subcellular location is the cytoplasm. The enzyme catalyses Endonucleolytic cleavage to 5'-phosphomonoester.. Functionally, digests double-stranded RNA. Involved in the processing of primary rRNA transcript to yield the immediate precursors to the large and small rRNAs (23S and 16S). Processes some mRNAs, and tRNAs when they are encoded in the rRNA operon. Processes pre-crRNA and tracrRNA of type II CRISPR loci if present in the organism. The chain is Ribonuclease 3 from Glaesserella parasuis serovar 5 (strain SH0165) (Haemophilus parasuis).